Reading from the N-terminus, the 360-residue chain is Phenylalanine--tRNA ligase alpha subunit (360 aa).

E260 lines the Mg(2+) pocket.

This sequence belongs to the class-II aminoacyl-tRNA synthetase family. Phe-tRNA synthetase alpha subunit type 1 subfamily. In terms of assembly, tetramer of two alpha and two beta subunits. It depends on Mg(2+) as a cofactor.

The protein resides in the cytoplasm. It catalyses the reaction tRNA(Phe) + L-phenylalanine + ATP = L-phenylalanyl-tRNA(Phe) + AMP + diphosphate + H(+). This chain is Phenylalanine--tRNA ligase alpha subunit, found in Agrobacterium fabrum (strain C58 / ATCC 33970) (Agrobacterium tumefaciens (strain C58)).